We begin with the raw amino-acid sequence, 683 residues long: Phenoloxidase 3 (683 aa).

Positions 1-48 are excised as a propeptide; it reads MADKKNLLLLFDHPTEPVFMDKGGNGTVFDVPASYVTDRYNKMCKKVQ. Residue asparagine 25 is glycosylated (N-linked (GlcNAc...) asparagine). Cu cation-binding residues include histidine 209, histidine 213, and histidine 239. Glutamate 351 functions as the Proton acceptor in the catalytic mechanism. A glycan (N-linked (GlcNAc...) asparagine) is linked at asparagine 358. Cu cation-binding residues include histidine 366, histidine 370, and histidine 406. Asparagine 492 and asparagine 514 each carry an N-linked (GlcNAc...) asparagine glycan. Intrachain disulfides connect cysteine 574–cysteine 617 and cysteine 576–cysteine 624.

This sequence belongs to the tyrosinase family. It depends on Cu(2+) as a cofactor. Post-translationally, upon activation, a trypsin type protease cleaves prophenol oxidase to yield the active enzyme.

Its subcellular location is the secreted. It carries out the reaction 2 L-dopa + O2 = 2 L-dopaquinone + 2 H2O. The catalysed reaction is L-tyrosine + O2 = L-dopaquinone + H2O. In terms of biological role, this is a copper-containing oxidase that functions in the formation of pigments such as melanins and other polyphenolic compounds. Catalyzes the rate-limiting conversions of tyrosine to DOPA, DOPA to DOPA-quinone and possibly 5,6 dihydroxyindole to indole-5'6 quinone. This Drosophila erecta (Fruit fly) protein is Phenoloxidase 3 (PPO3).